Consider the following 1307-residue polypeptide: Contactin-associated protein like 5-3 (1307 aa).

Residues 1-24 form the signal peptide; the sequence is MDFVPRLNSVLTLVLSGLWHFGLT. The Extracellular portion of the chain corresponds to 25 to 1238; it reads ATNCDNCDDP…PLTNAVLSDS (1214 aa). The F5/8 type C domain maps to 31-175; it reads CDDPLASFLS…IGMRMEVYGC (145 aa). Residues Cys31 and Cys175 are joined by a disulfide bond. 2 consecutive Laminin G-like domains span residues 181-361 and 368-545; these read VADF…TFSC and PITF…IDLC. Asn283 carries N-linked (GlcNAc...) asparagine glycosylation. Cys330 and Cys361 are oxidised to a cystine. Asn497 carries N-linked (GlcNAc...) asparagine glycosylation. Intrachain disulfides connect Cys513-Cys545, Cys551-Cys562, Cys556-Cys571, and Cys573-Cys583. Residues 547–584 form the EGF-like 1 domain; that stretch reads IKDRCLPNYCEHGGHCVQTWTTFYCNCSNTGYTGATCH. One can recognise a Fibrinogen C-terminal domain in the interval 585–792; it reads DSIYEQSCEV…LRCYGDRHFW (208 aa). Residues Asn600, Asn624, and Asn637 are each glycosylated (N-linked (GlcNAc...) asparagine). Residues 793 to 958 enclose the Laminin G-like 3 domain; it reads NAVSFSTEAS…MVTSGVRPGC (166 aa). Disulfide bonds link Cys931–Cys958, Cys962–Cys975, Cys969–Cys984, Cys986–Cys996, and Cys1165–Cys1200. One can recognise an EGF-like 2 domain in the interval 959–997; the sequence is PGHCSSYGNNCHNGGKCVEKHNSYSCDCTKSPYEGPFCQ. Residues 1019–1200 enclose the Laminin G-like 4 domain; that stretch reads PVSKNTSTSS…VQGSLREFSC (182 aa). Residues 1239 to 1259 traverse the membrane as a helical segment; sequence AVIGGVIAVVTFITFCVIGIM. At 1260–1307 the chain is on the cytoplasmic side; that stretch reads TRFLYQHKQSHCTSQKKEKEYSENLDSSFRHDIDLQSTTSKCKREYFI.

It belongs to the neurexin family.

Its subcellular location is the membrane. Functionally, may play a role in the correct development and proper functioning of the peripheral and central nervous system and be involved in cell adhesion and intercellular communication. This chain is Contactin-associated protein like 5-3 (Cntnap5c), found in Rattus norvegicus (Rat).